The sequence spans 392 residues: MSTRESFNPETYELDKSFRLTRFTELKGTGCKVPQDVLQKLLESLQENHFQEDEQFLGAVMPRLGIGMDTCVIPLRHGGLSLVQTTDYIYPIVDDPYMMGRIACANVLSDLYAMGVTECDNMLMLLGVSNKMTDRERDKVIPLIIQGFKDAAEEAGTSVTGGQTVLNPWIVLGGVATTVCQPNEFIMPDNAVPGDVLVLTKPLGTQVAVAVHQWLDIPEKWNKIKLVVTQEDVELAYQEAMMNMARLNRTAAGLMHTFNAHAATDITGFGILGHAQNLAKQQRNEVSFVIHNLPVLAKMAAVSKACGNMFGLMHGTCPETSGGLLICLPREQAARFCAEIKSPKYGEGHQAWIIGIVEKGNRTARIIDKPRIIEVAPQVATQNVNPTPGATS.

At Ser-2 the chain carries N-acetylserine. Cys-31 is a catalytic residue. ATP contacts are provided by residues Lys-32, 67–69 (GMD), Asp-87, Asp-110, and 161–164 (GGQT). A Mg(2+)-binding site is contributed by Asp-69. Asp-110 is a Mg(2+) binding site. Asp-265 contacts Mg(2+).

The protein belongs to the selenophosphate synthase 1 family. Class II subfamily. As to quaternary structure, homodimer. The cofactor is Mg(2+).

Its subcellular location is the cell membrane. The protein resides in the nucleus membrane. The catalysed reaction is hydrogenselenide + ATP + H2O = selenophosphate + AMP + phosphate + 2 H(+). In terms of biological role, synthesizes selenophosphate from selenide and ATP. This is Selenide, water dikinase 1 (Sephs1) from Mus musculus (Mouse).